We begin with the raw amino-acid sequence, 215 residues long: Ribose-5-phosphate isomerase A (215 aa).

Substrate is bound by residues 26 to 29 (TGST), 79 to 82 (DGAD), and 92 to 95 (KGGG). The active-site Proton acceptor is the Glu-101. Substrate is bound at residue Lys-119.

It belongs to the ribose 5-phosphate isomerase family. Homodimer.

It carries out the reaction aldehydo-D-ribose 5-phosphate = D-ribulose 5-phosphate. It participates in carbohydrate degradation; pentose phosphate pathway; D-ribose 5-phosphate from D-ribulose 5-phosphate (non-oxidative stage): step 1/1. Its function is as follows. Catalyzes the reversible conversion of ribose-5-phosphate to ribulose 5-phosphate. The chain is Ribose-5-phosphate isomerase A from Stenotrophomonas maltophilia (strain K279a).